A 273-amino-acid polypeptide reads, in one-letter code: MPEMPEVETVRRTLRPLVVGKTIDHVDIWYDKVITGDPETFKRELKGKTFTAVDRYAKFLLFRLGDLTVVSHLRMEGKYHLTTWDAPVDKHEHLQFAFTDGSSLRYADVRKFGRLQLVETGTEFQVTGLKNLGVEANSPEFRLDYFEKGLKKRSMNIKSLLMSQTLVAGLGNIYVDEVLWQSRINPLTPANELTKDQVKQLHSAINETIEEATKYGGTTVHSFLNAEGGAGHYQEKLKVYGKEGQPCPRCGEDFVKIKISGRGTTYCLHCQKR.

Pro-2 functions as the Schiff-base intermediate with DNA in the catalytic mechanism. The active-site Proton donor is the Glu-3. Lys-58 acts as the Proton donor; for beta-elimination activity in catalysis. DNA-binding residues include His-91, Arg-110, and Arg-153. An FPG-type zinc finger spans residues 238–272; it reads KVYGKEGQPCPRCGEDFVKIKISGRGTTYCLHCQK. Residue Arg-262 is the Proton donor; for delta-elimination activity of the active site.

This sequence belongs to the FPG family. In terms of assembly, monomer. It depends on Zn(2+) as a cofactor.

The catalysed reaction is Hydrolysis of DNA containing ring-opened 7-methylguanine residues, releasing 2,6-diamino-4-hydroxy-5-(N-methyl)formamidopyrimidine.. The enzyme catalyses 2'-deoxyribonucleotide-(2'-deoxyribose 5'-phosphate)-2'-deoxyribonucleotide-DNA = a 3'-end 2'-deoxyribonucleotide-(2,3-dehydro-2,3-deoxyribose 5'-phosphate)-DNA + a 5'-end 5'-phospho-2'-deoxyribonucleoside-DNA + H(+). In terms of biological role, involved in base excision repair of DNA damaged by oxidation or by mutagenic agents. Acts as a DNA glycosylase that recognizes and removes damaged bases. Has a preference for oxidized purines, such as 7,8-dihydro-8-oxoguanine (8-oxoG). Has AP (apurinic/apyrimidinic) lyase activity and introduces nicks in the DNA strand. Cleaves the DNA backbone by beta-delta elimination to generate a single-strand break at the site of the removed base with both 3'- and 5'-phosphates. In Lactobacillus delbrueckii subsp. bulgaricus (strain ATCC 11842 / DSM 20081 / BCRC 10696 / JCM 1002 / NBRC 13953 / NCIMB 11778 / NCTC 12712 / WDCM 00102 / Lb 14), this protein is Formamidopyrimidine-DNA glycosylase.